The primary structure comprises 109 residues: Spermidine export protein MdtI (109 aa).

The next 4 membrane-spanning stretches (helical) occupy residues 6 to 26 (FYPI…NILL), 36 to 56 (WLGI…AQAV), 64 to 84 (AYAL…WILF), and 88 to 108 (LNYK…MIKL).

It belongs to the drug/metabolite transporter (DMT) superfamily. Small multidrug resistance (SMR) (TC 2.A.7.1) family. MdtI subfamily. In terms of assembly, forms a complex with MdtJ.

Its subcellular location is the cell inner membrane. Catalyzes the excretion of spermidine. In Yersinia pseudotuberculosis serotype O:1b (strain IP 31758), this protein is Spermidine export protein MdtI.